We begin with the raw amino-acid sequence, 388 residues long: Bifunctional enzyme IspD/IspF (388 aa).

The 2-C-methyl-D-erythritol 4-phosphate cytidylyltransferase stretch occupies residues 1–228 (MRIAALLLAA…GVIDRNLLPR (228 aa)). Residues 228–388 (RVGLGYDVHA…SIMVPDNGEA (161 aa)) form a 2-C-methyl-D-erythritol 2,4-cyclodiphosphate synthase region. A divalent metal cation-binding residues include Asp-234 and His-236. 4-CDP-2-C-methyl-D-erythritol 2-phosphate contacts are provided by residues 234–236 (DVH) and 260–261 (HS). His-268 contributes to the a divalent metal cation binding site. Residues 282-284 (DIG), 358-361 (TTSE), Phe-365, and Arg-368 contribute to the 4-CDP-2-C-methyl-D-erythritol 2-phosphate site.

This sequence in the N-terminal section; belongs to the IspD/TarI cytidylyltransferase family. IspD subfamily. The protein in the C-terminal section; belongs to the IspF family. It depends on a divalent metal cation as a cofactor.

The enzyme catalyses 2-C-methyl-D-erythritol 4-phosphate + CTP + H(+) = 4-CDP-2-C-methyl-D-erythritol + diphosphate. It catalyses the reaction 4-CDP-2-C-methyl-D-erythritol 2-phosphate = 2-C-methyl-D-erythritol 2,4-cyclic diphosphate + CMP. It participates in isoprenoid biosynthesis; isopentenyl diphosphate biosynthesis via DXP pathway; isopentenyl diphosphate from 1-deoxy-D-xylulose 5-phosphate: step 2/6. The protein operates within isoprenoid biosynthesis; isopentenyl diphosphate biosynthesis via DXP pathway; isopentenyl diphosphate from 1-deoxy-D-xylulose 5-phosphate: step 4/6. Its function is as follows. Bifunctional enzyme that catalyzes the formation of 4-diphosphocytidyl-2-C-methyl-D-erythritol from CTP and 2-C-methyl-D-erythritol 4-phosphate (MEP) (IspD), and catalyzes the conversion of 4-diphosphocytidyl-2-C-methyl-D-erythritol 2-phosphate (CDP-ME2P) to 2-C-methyl-D-erythritol 2,4-cyclodiphosphate (ME-CPP) with a corresponding release of cytidine 5-monophosphate (CMP) (IspF). This is Bifunctional enzyme IspD/IspF from Gluconobacter oxydans (strain 621H) (Gluconobacter suboxydans).